Reading from the N-terminus, the 327-residue chain is Phenylalanine--tRNA ligase alpha subunit (327 aa).

Position 252 (Glu252) interacts with Mg(2+).

It belongs to the class-II aminoacyl-tRNA synthetase family. Phe-tRNA synthetase alpha subunit type 1 subfamily. Tetramer of two alpha and two beta subunits. Mg(2+) is required as a cofactor.

The protein resides in the cytoplasm. The enzyme catalyses tRNA(Phe) + L-phenylalanine + ATP = L-phenylalanyl-tRNA(Phe) + AMP + diphosphate + H(+). The chain is Phenylalanine--tRNA ligase alpha subunit from Aliivibrio fischeri (strain ATCC 700601 / ES114) (Vibrio fischeri).